The following is a 452-amino-acid chain: Membrane-bound acylglycerophosphatidylinositol O-acyltransferase mboa-7 (452 aa).

4 consecutive transmembrane segments (helical) span residues 4-24 (IIGL…FSFA), 53-73 (PRIA…AFAP), 79-99 (FYVF…HYFL), and 104-124 (VASH…GITF). Asn-137 carries N-linked (GlcNAc...) asparagine glycosylation. 3 helical membrane passes run 153 to 173 (FAYF…YQML), 220 to 240 (AIWE…FVVF), and 244 to 264 (VYSA…GIYP). Asn-319 is a glycosylation site (N-linked (GlcNAc...) asparagine). His-350 is an active-site residue. A helical membrane pass occupies residues 354–374 (AGYFMSFGVVAMCAILEDVIF). Residue Asn-414 is glycosylated (N-linked (GlcNAc...) asparagine). The helical transmembrane segment at 421-441 (FWSSIYYWLPLLCVPFYIYSV) threads the bilayer.

It belongs to the membrane-bound acyltransferase family.

The protein localises to the membrane. It catalyses the reaction a 1-acyl-sn-glycero-3-phospho-(1D-myo-inositol) + an acyl-CoA = a 1,2-diacyl-sn-glycero-3-phospho-(1D-myo-inositol) + CoA. The enzyme catalyses a fatty acyl-[ACP] + a 1-acyl-sn-glycero-3-phosphate = a 1,2-diacyl-sn-glycero-3-phosphate + holo-[ACP]. It participates in lipid metabolism; phospholipid metabolism. Acyltransferase which mediates the conversion of lysophosphatidylinositol (1-acylglycerophosphatidylinositol or LPI) into phosphatidylinositol (1,2-diacyl-sn-glycero-3-phosphoinositol or PI) (LPIAT activity). Prefers arachidonoyl-CoA or eicosapentaenoic acid (EPA) as the acyl donor. Prefers sn-2-LPI rather than sn-1-LPI as the acyl acceptor. Lysophospholipid acyltransferases (LPLATs) catalyze the reacylation step of the phospholipid remodeling pathway also known as the Lands cycle. The sequence is that of Membrane-bound acylglycerophosphatidylinositol O-acyltransferase mboa-7 from Caenorhabditis briggsae.